The primary structure comprises 61 residues: Small ribosomal subunit protein uS14 (61 aa).

Residues Cys24, Cys27, Cys40, and Cys43 each coordinate Zn(2+).

The protein belongs to the universal ribosomal protein uS14 family. Zinc-binding uS14 subfamily. In terms of assembly, part of the 30S ribosomal subunit. Contacts proteins S3 and S10. Zn(2+) is required as a cofactor.

Binds 16S rRNA, required for the assembly of 30S particles and may also be responsible for determining the conformation of the 16S rRNA at the A site. This is Small ribosomal subunit protein uS14 from Ureaplasma parvum serovar 3 (strain ATCC 27815 / 27 / NCTC 11736).